The chain runs to 119 residues: Large ribosomal subunit protein uL24 (119 aa).

It belongs to the universal ribosomal protein uL24 family. Part of the 50S ribosomal subunit.

Functionally, one of two assembly initiator proteins, it binds directly to the 5'-end of the 23S rRNA, where it nucleates assembly of the 50S subunit. One of the proteins that surrounds the polypeptide exit tunnel on the outside of the subunit. The sequence is that of Large ribosomal subunit protein uL24 from Leptospira interrogans serogroup Icterohaemorrhagiae serovar copenhageni (strain Fiocruz L1-130).